Reading from the N-terminus, the 973-residue chain is Piwi-like protein 2 (973 aa).

Residues 28–65 (WPQASKPLDPALGRGAPAGRGHVFGKPEEPSTQRGPAQ) form a disordered region. Positions 34–48 (PLDPALGRGAPAGRG) are enriched in low complexity. Position 47 is a symmetric dimethylarginine (Arg-47). Arg-76 and Arg-97 each carry omega-N-methylarginine; by PRMT5; alternate. Arg-76 bears the Symmetric dimethylarginine; by PRMT5; alternate mark. Arg-97 carries the symmetric dimethylarginine; alternate modification. The residue at position 102 (Arg-102) is a Symmetric dimethylarginine; by PRMT5; alternate. Arg-102 is subject to Omega-N-methylarginine; alternate. 2 positions are modified to symmetric dimethylarginine: Arg-146 and Arg-158. Positions 162–199 (GISREVDKPPCTFSTPSRGPPQLSSPPALPQSPLHSPD) are disordered. Arg-165 is modified (symmetric dimethylarginine; by PRMT5). In terms of domain architecture, PAZ spans 389–502 (CVLDVMHAIY…LLPELSFMTG (114 aa)). Arg-551 carries the symmetric dimethylarginine; by PRMT5 modification. Residues 668-959 (MVVCIIMGPR…LAFLSGHILH (292 aa)) form the Piwi domain. Active-site residues include Asp-745, Glu-783, Asp-815, and His-948.

Belongs to the argonaute family. Piwi subfamily. In terms of assembly, interacts with DDX4, MAEL, EIF3A, EIF4E, EIF4G, PRMT5 and WDR77. Associates with EIF4E- and EIF4G-containing m7G cap-binding complexes. Interacts (when methylated on arginine residues) with TDRD1 and TDRKH/TDRD2. Interacts with TDRD12. Component of the PET complex, at least composed of EXD1, PIWIL2, TDRD12 and piRNAs. Interacts with MOV10L1. Interacts with GPAT2. Interacts with TEX19. Interacts with GSK3B. Interacts (via PIWI domain) with BMAL1 and CLOCK. Interacts with TEX15. Mg(2+) serves as cofactor. Post-translationally, arginine methylation by PRMT5 is required for the interaction with Tudor domain-containing protein TDRD1 and subsequent localization to the meiotic nuage, also named P granule. As to expression, expressed in adult testis and in most tumors.

Its subcellular location is the cytoplasm. Functionally, endoribonuclease that plays a central role during spermatogenesis by repressing transposable elements and preventing their mobilization, which is essential for the germline integrity. Plays an essential role in meiotic differentiation of spermatocytes, germ cell differentiation and in self-renewal of spermatogonial stem cells. Acts via the piRNA metabolic process, which mediates the repression of transposable elements during meiosis by forming complexes composed of piRNAs and Piwi proteins and govern the methylation and subsequent repression of transposons. During piRNA biosynthesis, plays a key role in the piRNA amplification loop, also named ping-pong amplification cycle, by acting as a 'slicer-competent' piRNA endoribonuclease that cleaves primary piRNAs, which are then loaded onto 'slicer-incompetent' PIWIL4. PIWIL2 slicing produces a pre-miRNA intermediate, which is then processed in mature piRNAs, and as well as a 16 nucleotide by-product that is degraded. Required for PIWIL4/MIWI2 nuclear localization and association with secondary piRNAs antisense. Besides their function in transposable elements repression, piRNAs are probably involved in other processes during meiosis such as translation regulation. Indirectly modulates expression of genes such as PDGFRB, SLC2A1, ITGA6, GJA7, THY1, CD9 and STRA8. When overexpressed, acts as an oncogene by inhibition of apoptosis and promotion of proliferation in tumors. Represses circadian rhythms by promoting the stability and activity of core clock components BMAL1 and CLOCK by inhibiting GSK3B-mediated phosphorylation and ubiquitination-dependent degradation of these proteins. In Homo sapiens (Human), this protein is Piwi-like protein 2 (PIWIL2).